Here is a 110-residue protein sequence, read N- to C-terminus: Large ribosomal subunit protein uL22 (110 aa).

Belongs to the universal ribosomal protein uL22 family. As to quaternary structure, part of the 50S ribosomal subunit.

This protein binds specifically to 23S rRNA; its binding is stimulated by other ribosomal proteins, e.g. L4, L17, and L20. It is important during the early stages of 50S assembly. It makes multiple contacts with different domains of the 23S rRNA in the assembled 50S subunit and ribosome. In terms of biological role, the globular domain of the protein is located near the polypeptide exit tunnel on the outside of the subunit, while an extended beta-hairpin is found that lines the wall of the exit tunnel in the center of the 70S ribosome. This Paracidovorax citrulli (strain AAC00-1) (Acidovorax citrulli) protein is Large ribosomal subunit protein uL22.